The sequence spans 302 residues: UDP-3-O-acyl-N-acetylglucosamine deacetylase (302 aa).

Zn(2+)-binding residues include H78, H237, and D241. The active-site Proton donor is the H264.

Belongs to the LpxC family. Zn(2+) is required as a cofactor.

It carries out the reaction a UDP-3-O-[(3R)-3-hydroxyacyl]-N-acetyl-alpha-D-glucosamine + H2O = a UDP-3-O-[(3R)-3-hydroxyacyl]-alpha-D-glucosamine + acetate. It participates in glycolipid biosynthesis; lipid IV(A) biosynthesis; lipid IV(A) from (3R)-3-hydroxytetradecanoyl-[acyl-carrier-protein] and UDP-N-acetyl-alpha-D-glucosamine: step 2/6. Catalyzes the hydrolysis of UDP-3-O-myristoyl-N-acetylglucosamine to form UDP-3-O-myristoylglucosamine and acetate, the committed step in lipid A biosynthesis. The protein is UDP-3-O-acyl-N-acetylglucosamine deacetylase of Hahella chejuensis (strain KCTC 2396).